The primary structure comprises 483 residues: Glutamyl-tRNA(Gln) amidotransferase subunit A (483 aa).

Residues Lys-75 and Ser-150 each act as charge relay system in the active site. Residue Ser-174 is the Acyl-ester intermediate of the active site.

This sequence belongs to the amidase family. GatA subfamily. As to quaternary structure, heterotrimer of A, B and C subunits.

It catalyses the reaction L-glutamyl-tRNA(Gln) + L-glutamine + ATP + H2O = L-glutaminyl-tRNA(Gln) + L-glutamate + ADP + phosphate + H(+). Functionally, allows the formation of correctly charged Gln-tRNA(Gln) through the transamidation of misacylated Glu-tRNA(Gln) in organisms which lack glutaminyl-tRNA synthetase. The reaction takes place in the presence of glutamine and ATP through an activated gamma-phospho-Glu-tRNA(Gln). The chain is Glutamyl-tRNA(Gln) amidotransferase subunit A from Legionella pneumophila subsp. pneumophila (strain Philadelphia 1 / ATCC 33152 / DSM 7513).